The following is a 120-amino-acid chain: Autophagy-related protein 8d (120 aa).

The Phosphatidylethanolamine amidated glycine moiety is linked to residue glycine 117. Residues 118 to 120 (IFF) constitute a propeptide, removed in mature form.

It belongs to the ATG8 family. In terms of assembly, interacts with ATG4B. Interacts with NBR1. In terms of processing, the C-terminal 3 residues are removed by ATG4 to expose Gly-117 at the C-terminus. This Gly-117 forms then a thioester bond with the 'Cys-558' of ATG7 (E1-like activating enzyme) before being transferred to the 'Cys-258' of ATG3 (the specific E2 conjugating enzyme), in order to be finally amidated with phosphatidylethanolamine. This lipid modification anchors ATG8 to autophagosomes. In terms of tissue distribution, constitutively expressed.

The protein resides in the cytoplasmic vesicle. The protein localises to the autophagosome membrane. It localises to the vacuole membrane. Its subcellular location is the cytoplasm. It is found in the cytoskeleton. Its function is as follows. Ubiquitin-like modifier involved in autophagosomes formation. May mediate the delivery of the autophagosomes to the vacuole via the microtubule cytoskeleton. This is Autophagy-related protein 8d (ATG8D) from Arabidopsis thaliana (Mouse-ear cress).